The sequence spans 291 residues: Bifunctional protein FolD (291 aa).

Residues 171–173 (GVS) and I239 each bind NADP(+).

The protein belongs to the tetrahydrofolate dehydrogenase/cyclohydrolase family. In terms of assembly, homodimer.

It carries out the reaction (6R)-5,10-methylene-5,6,7,8-tetrahydrofolate + NADP(+) = (6R)-5,10-methenyltetrahydrofolate + NADPH. The enzyme catalyses (6R)-5,10-methenyltetrahydrofolate + H2O = (6R)-10-formyltetrahydrofolate + H(+). The protein operates within one-carbon metabolism; tetrahydrofolate interconversion. Functionally, catalyzes the oxidation of 5,10-methylenetetrahydrofolate to 5,10-methenyltetrahydrofolate and then the hydrolysis of 5,10-methenyltetrahydrofolate to 10-formyltetrahydrofolate. This chain is Bifunctional protein FolD, found in Xylella fastidiosa (strain Temecula1 / ATCC 700964).